Consider the following 156-residue polypeptide: Endoribonuclease YbeY (156 aa).

3 residues coordinate Zn(2+): His117, His121, and His127.

The protein belongs to the endoribonuclease YbeY family. Requires Zn(2+) as cofactor.

Its subcellular location is the cytoplasm. In terms of biological role, single strand-specific metallo-endoribonuclease involved in late-stage 70S ribosome quality control and in maturation of the 3' terminus of the 16S rRNA. This Herminiimonas arsenicoxydans protein is Endoribonuclease YbeY.